The chain runs to 221 residues: ATP-dependent Clp protease proteolytic subunit 1, mitochondrial (221 aa).

The transit peptide at 1–25 directs the protein to the mitochondrion; that stretch reads MLRRLVTSSLSASRSMSASVQSRVG. Ser120 (nucleophile) is an active-site residue. His145 is an active-site residue.

It belongs to the peptidase S14 family. As to quaternary structure, tetradecamer that assembles into a two heptameric rings with a central cavity. In terms of tissue distribution, expressed in the intestine.

The protein resides in the mitochondrion matrix. The enzyme catalyses Hydrolysis of proteins to small peptides in the presence of ATP and magnesium. alpha-casein is the usual test substrate. In the absence of ATP, only oligopeptides shorter than five residues are hydrolyzed (such as succinyl-Leu-Tyr-|-NHMec, and Leu-Tyr-Leu-|-Tyr-Trp, in which cleavage of the -Tyr-|-Leu- and -Tyr-|-Trp bonds also occurs).. Functionally, clp cleaves peptides in various proteins in a process that requires ATP hydrolysis. Clp may be responsible for a fairly general and central housekeeping function rather than for the degradation of specific substrates. The protein is ATP-dependent Clp protease proteolytic subunit 1, mitochondrial (clpp-1) of Caenorhabditis elegans.